The following is a 476-amino-acid chain: MNFETVIGLEVHVELKTNSKIFSSAPAHFGAEPNTNTTVVDLGMPGVLPVLNKRAVEYGMKAAMAINCEIAEHTKFDRKNYFYPDNPKAYQISQFDKPIGEHGWIEIEVGGKKKKIGITRLHLEEDAGKNTHTSHGYSLVDINRQGTPLIEIVSEPDIRSAEEAYAYLEKLKSIIQYTGVSDVKMEEGSMRCDANISIRPIGQEAFGVKTELKNLNSFNNVRKGIEYEEKRQAEVLLSGGIIEQETRRFEEATGKTSLMRIKEGSDDYRYFPEPDLVDLFIDDAWKERIRAEIPELPDKRQIRYINDLGLPAYDAMVLTLTKEMSDFFEATLAARADAKQASNWLMGEVSAYLNAEQKELNETGLTPENLAGMIKLIEAGTISSKIAKKVFRELAQNGGDAEQVVKDKGLVQISDEGALRTIIGEILDNNEQSITDYKNGKDRAVGFLVGQVMKATKGQANPPMVNKLLLEEMNKR.

The protein belongs to the GatB/GatE family. GatB subfamily. As to quaternary structure, heterotrimer of A, B and C subunits.

The catalysed reaction is L-glutamyl-tRNA(Gln) + L-glutamine + ATP + H2O = L-glutaminyl-tRNA(Gln) + L-glutamate + ADP + phosphate + H(+). The enzyme catalyses L-aspartyl-tRNA(Asn) + L-glutamine + ATP + H2O = L-asparaginyl-tRNA(Asn) + L-glutamate + ADP + phosphate + 2 H(+). Allows the formation of correctly charged Asn-tRNA(Asn) or Gln-tRNA(Gln) through the transamidation of misacylated Asp-tRNA(Asn) or Glu-tRNA(Gln) in organisms which lack either or both of asparaginyl-tRNA or glutaminyl-tRNA synthetases. The reaction takes place in the presence of glutamine and ATP through an activated phospho-Asp-tRNA(Asn) or phospho-Glu-tRNA(Gln). This Listeria welshimeri serovar 6b (strain ATCC 35897 / DSM 20650 / CCUG 15529 / CIP 8149 / NCTC 11857 / SLCC 5334 / V8) protein is Aspartyl/glutamyl-tRNA(Asn/Gln) amidotransferase subunit B.